Consider the following 562-residue polypeptide: NAD-dependent malic enzyme (562 aa).

Y101 serves as the catalytic Proton donor. R154 serves as a coordination point for NAD(+). The active-site Proton acceptor is K172. A divalent metal cation-binding residues include E243, D244, and D267. D267 and N415 together coordinate NAD(+).

It belongs to the malic enzymes family. As to quaternary structure, homotetramer. The cofactor is Mg(2+). Mn(2+) serves as cofactor.

The catalysed reaction is (S)-malate + NAD(+) = pyruvate + CO2 + NADH. It catalyses the reaction oxaloacetate + H(+) = pyruvate + CO2. In Shewanella baltica (strain OS223), this protein is NAD-dependent malic enzyme.